A 185-amino-acid polypeptide reads, in one-letter code: Casparian strip membrane protein 2 (185 aa).

Topologically, residues 1-25 (MKAVSIEAGEGSKAKRVHGVNRGIS) are cytoplasmic. Residues 26 to 46 (VFDLVLRIVALVGTLASAVAM) form a helical membrane-spanning segment. At 47–73 (GTADQALSFSTQIVNFEAQYDDIDAFK) the chain is on the extracellular side. Residues 74 to 94 (FFVVSNSITCVYLALSIPISI) form a helical membrane-spanning segment. Topologically, residues 95–106 (FHIIRSRAGKSR) are cytoplasmic. The helical transmembrane segment at 107-127 (VLLIVLDAIMLVFLTSGASAA) threads the bilayer. The Extracellular segment spans residues 128 to 160 (AAIVYLAHNGNTSTNWFSICQQYTDFCQRSAGS). N-linked (GlcNAc...) asparagine glycosylation occurs at asparagine 138. The chain crosses the membrane as a helical span at residues 161 to 181 (LIGSFGAMALMVLLIILSSIA). At 182–185 (LSRR) the chain is on the cytoplasmic side.

This sequence belongs to the Casparian strip membrane proteins (CASP) family. As to quaternary structure, homodimer and heterodimers.

Its subcellular location is the cell membrane. Regulates membrane-cell wall junctions and localized cell wall deposition. Required for establishment of the Casparian strip membrane domain (CSD) and the subsequent formation of Casparian strips, a cell wall modification of the root endodermis that determines an apoplastic barrier between the intraorganismal apoplasm and the extraorganismal apoplasm and prevents lateral diffusion. The sequence is that of Casparian strip membrane protein 2 from Solanum demissum (Wild potato).